We begin with the raw amino-acid sequence, 448 residues long: Phosphoglucosamine mutase (448 aa).

The active-site Phosphoserine intermediate is the serine 100. The Mg(2+) site is built by serine 100, aspartate 240, aspartate 242, and aspartate 244. Serine 100 bears the Phosphoserine mark.

The protein belongs to the phosphohexose mutase family. Mg(2+) is required as a cofactor. Post-translationally, activated by phosphorylation.

The enzyme catalyses alpha-D-glucosamine 1-phosphate = D-glucosamine 6-phosphate. Functionally, catalyzes the conversion of glucosamine-6-phosphate to glucosamine-1-phosphate. This chain is Phosphoglucosamine mutase, found in Bacillus cereus (strain G9842).